Consider the following 314-residue polypeptide: Olfactory receptor 8D4 (314 aa).

The Extracellular segment spans residues 1 to 25; the sequence is MGVKNHSTVTEFLLSGLTEQAELQL. N-linked (GlcNAc...) asparagine glycosylation occurs at N5. Residues 26-46 form a helical membrane-spanning segment; sequence PLFCLFLGIYTVTVVGNLSMI. Residues 47–54 are Cytoplasmic-facing; that stretch reads SIIRLNRQ. Residues 55–75 form a helical membrane-spanning segment; the sequence is LHTPMYYFLSSLSFLDFCYSS. Residues 76 to 99 are Extracellular-facing; the sequence is VITPKMLSGFLCRDRSISYSGCMI. C97 and C189 are disulfide-bonded. A helical membrane pass occupies residues 100 to 120; sequence QLFFFCVCVISECYMLAAMAC. Topologically, residues 121-139 are cytoplasmic; that stretch reads DRYVAICSPLLYRVIMSPR. Residues 140-160 traverse the membrane as a helical segment; the sequence is VCSLLVAAVFSVGFTDAVIHG. The Extracellular portion of the chain corresponds to 161 to 197; the sequence is GCILRLSFCGSNIIKHYFCDIVPLIKLSCSSTYIDEL. A helical membrane pass occupies residues 198-217; the sequence is LIFVIGGFNMVATSLTIIIS. Residues 218–237 are Cytoplasmic-facing; that stretch reads YAFILTSILRIHSKKGRCKA. The chain crosses the membrane as a helical span at residues 238-258; the sequence is FSTCSSHLTAVLMFYGSLMSM. Residues 259–271 lie on the Extracellular side of the membrane; it reads YLKPASSSSLTQE. Residues 272 to 292 form a helical membrane-spanning segment; sequence KVSSVFYTTVILMLNPLIYSL. The Cytoplasmic segment spans residues 293 to 314; it reads RNNEVRNALMKLLRRKISLSPG.

This sequence belongs to the G-protein coupled receptor 1 family.

It is found in the cell membrane. In terms of biological role, odorant receptor. The protein is Olfactory receptor 8D4 (OR8D4) of Homo sapiens (Human).